The sequence spans 1348 residues: MSPLETNPLSPETAMREPAETSTTEEQASTPHAADEKKILSDLSAPSSTTATPADKEHRPKSSSSNNAVSVNEVDALIAHLPEDERQVLKTQLEEIKVNISFFGLWRYATKMDILIMVISTICAIAAGAALPLFTILFGSLASTFQRIMLYQISYDEFYDELTKNVLYFVYLGIGEFVTVYVSTVGFIYTGEHATQKIREYYLESILRQNIGYFDKLGAGEVTTRITADTNLIQDGISEKVGLTLTALATFVTAFIIAYVKYWKLALICSSTIVALVLTMGGGSQFIIKYSKKSLDSYGAGGTVAEEVISSIRNATAFGTQDKLAKQYEVHLDEAEKWGTKNQIVMGFMIGAMFGLMYSNYGLGFWMGSRFLVDGAVDVGDILTVLMAILIGSFSLGNVSPNAQAFTNAVAAAAKIFGTIDRQSPLDPYSNEGKTLDHFEGHIELRNVKHIYPSRPEVTVMEDVSLSMPAGKTTALVGPSGSGKSTVVGLVERFYMPVRGTVLLDGHDIKDLNLRWLRQQISLVSQEPVLFGTTIYKNIRHGLIGTKYENESEDKVRELIENAAKMANAHDFITALPEGYETNVGQRGFLLSGGQKQRIAIARAVVSDPKILLLDEATSALDTKSEGVVQAALERAAEGRTTIVIAHRLSTIKTAHNIVVLVNGKIAEQGTHDELVDRGGAYRKLVEAQRINEQKEADALEDADAEDLTNADIAKIKTASSASSDLDGKPTTIDRTGTHKSVSSAILSKRPPETTPKYSLWTLLKFVASFNRPEIPYMLIGLVFSVLAGGGQPTQAVLYAKAISTLSLPESQYSKLRHDADFWSLMFFVVGIIQFITQSTNGAAFAVCSERLIRRARSTAFRTILRQDIAFFDKEENSTGALTSFLSTETKHLSGVSGVTLGTILMTSTTLGAAIIIALAIGWKLALVCISVVPVLLACGFYRFYMLAQFQSRSKLAYEGSANFACEATSSIRTVASLTRERDVWEIYHAQLDAQGRTSLISVLRSSLLYASSQALVFFCVALGFWYGGTLLGHHEYDIFRFFVCFSEILFGAQSAGTVFSFAPDMGKAKNAAAEFRRLFDRKPQIDNWSEEGEKLETVEGEIEFRNVHFRYPTRPEQPVLRGLDLTVKPGQYVALVGPSGCGKSTTIALLERFYDAIAGSILVDGKDISKLNINSYRSFLSLVSQEPTLYQGTIKENILLGIVEDDVPEEFLIKACKDANIYDFIMSLPEGFNTVVGSKGGMLSGGQKQRVAIARALLRDPKILLLDEATSALDSESEKVVQAALDAAARGRTTIAVAHRLSTIQKADVIYVFDQGKIVESGTHSELVQKKGRYYELVNLQSLGKGH.

Positions 1–10 (MSPLETNPLS) are enriched in polar residues. A disordered region spans residues 1–67 (MSPLETNPLS…HRPKSSSSNN (67 aa)). The span at 20–31 (ETSTTEEQASTP) shows a compositional bias: low complexity. N-linked (GlcNAc...) asparagine glycosylation occurs at N99. A run of 4 helical transmembrane segments spans residues 114–134 (ILIM…LPLF), 168–188 (YFVY…VGFI), 240–260 (KVGL…IAYV), and 268–288 (ICSS…QFII). Residues 118-408 (VISTICAIAA…VSPNAQAFTN (291 aa)) enclose the ABC transmembrane type-1 1 domain. N-linked (GlcNAc...) asparagine glycosylation occurs at N314. 2 helical membrane-spanning segments follow: residues 344–364 (IVMG…YGLG) and 371–391 (FLVD…AILI). Residues 443 to 688 (IELRNVKHIY…GGAYRKLVEA (246 aa)) enclose the ABC transporter 1 domain. 478-485 (GPSGSGKS) is a binding site for ATP. N-linked (GlcNAc...) asparagine glycosylation is present at N550. Transmembrane regions (helical) follow at residues 778–798 (MLIG…QAVL) and 825–845 (LMFF…GAAF). The 290-residue stretch at 779 to 1068 (LIGLVFSVLA…VFSFAPDMGK (290 aa)) folds into the ABC transmembrane type-1 2 domain. N877 is a glycosylation site (N-linked (GlcNAc...) asparagine). 4 helical membrane-spanning segments follow: residues 892–912 (HLSG…TTLG), 925–947 (LALV…FYML), 1015–1035 (ALVF…LGHH), and 1042–1062 (FFVC…VFSF). Residue N1088 is glycosylated (N-linked (GlcNAc...) asparagine). The ABC transporter 2 domain occupies 1103-1341 (IEFRNVHFRY…KGRYYELVNL (239 aa)). 1138-1145 (GPSGCGKS) serves as a coordination point for ATP.

This sequence belongs to the ABC transporter superfamily. ABCB family. Multidrug resistance exporter (TC 3.A.1.201) subfamily.

Its subcellular location is the cell membrane. With respect to regulation, fenamirol efflux transporter activity is inhibited by the cyclosporin derivative PSC 833, nigericin, reserpine and valinomycin. The effect of reserpine is transiant, while that of the cyclosporin derivative PSC 833, nigericin and valinomycin is proportional to the time of exposure. Cyclohexinmide has inhibitory effect only when applied prior to addition of the fungicide. In terms of biological role, pleiotropic ABC efflux transporter involved in the protection of the cells against a wide range of toxic compounds. Confers resistance to the azole fenarimol via efflux transport. May also be involved in the secretion of penicillin. This is ABC multidrug transporter atrD from Emericella nidulans (Aspergillus nidulans).